The chain runs to 864 residues: MSRFFARGGSDSESSSEDEQELYSDREEEEQFSDSEEESSEAESSEEESSDDEGAGASRFLKNVSESEESEDEERVTVVKSAKDKRLDELEGIIKAIENAEKINDWAVISSEFDKLNRQIVKVTQAGPTPKIYIQTVADLEDFVNETIAKQKSSNKKMNASNAKGFNAVKQRIKKNNKEYATLIEKYRADKDGFMAGGDEEPKPVISAPRISKVERVEAPVAVTATADDDGFATVGRGGKTLQYTPESILKHLRVIVESRGKKNTDRFEQIRTMEKLLEVAQNPYQRIRIYLTLISTRFDLTSSSSANYMSVDQWKLAQQEFSTLLSVLESNREYVVTEGAEEWEDDEKQPQVAAGETLHVPGSIVSYVERLDDELTRSLQQIDPHTAEYIERLSDEKELYTNLVRTQVYAEALTTSEKSDPRQDSLNRVIMRRLEHIYFKPAQVVTILEEGTWKSLPSNLASDITPRANSGEVTSLVQTLCNYLFRHSDGILRARAMLCQIYFLALHDQYYRSRDLMLMSHLTENIANFDVSTQILFNRTLVQIGLCAFRAGLVYEAQNTLSEVCGSGRQKELLAQGIILQRYSTVSPEQERLERQRQLPFHMHINLELLECIYLTSSMFLEVPLMAQTSSSPEMKRRVISKTFRRMLDYNERQVFTGPAENTRDGVIMSAKFLAAGDWKKAAEMLNSIKIWDLMPQPEKIKEMLSQQIQEEGLRTYLFTYAPFYDSVSIATLSNMFELPEKKIQAIISRMISHEELAAALDQVNNAIVFRKGVELSRLQSQIVTLADKSMNLLEANEKTLEQRTQGMANAFQRDQGAGARGGRGAGRGGQARGGPRFPGGQQGRRPGGQQFSGGALGGAIKA.

Residues 1–77 (MSRFFARGGS…EESEDEERVT (77 aa)) form a disordered region. Residues 14–54 (SSSEDEQELYSDREEEEQFSDSEEESSEAESSEEESSDDEG) show a composition bias toward acidic residues. The region spanning 602–776 (FHMHINLELL…NAIVFRKGVE (175 aa)) is the PCI domain. The segment at 815–864 (RDQGAGARGGRGAGRGGQARGGPRFPGGQQGRRPGGQQFSGGALGGAIKA) is disordered. Gly residues predominate over residues 820–864 (GARGGRGAGRGGQARGGPRFPGGQQGRRPGGQQFSGGALGGAIKA).

The protein belongs to the eIF-3 subunit C family. As to quaternary structure, component of the eukaryotic translation initiation factor 3 (eIF-3) complex.

The protein localises to the cytoplasm. Component of the eukaryotic translation initiation factor 3 (eIF-3) complex, which is involved in protein synthesis of a specialized repertoire of mRNAs and, together with other initiation factors, stimulates binding of mRNA and methionyl-tRNAi to the 40S ribosome. The eIF-3 complex specifically targets and initiates translation of a subset of mRNAs involved in cell proliferation. This Aspergillus terreus (strain NIH 2624 / FGSC A1156) protein is Eukaryotic translation initiation factor 3 subunit C (nip1).